We begin with the raw amino-acid sequence, 249 residues long: Aspartate/glutamate leucyltransferase (249 aa).

Belongs to the R-transferase family. Bpt subfamily.

It is found in the cytoplasm. It carries out the reaction N-terminal L-glutamyl-[protein] + L-leucyl-tRNA(Leu) = N-terminal L-leucyl-L-glutamyl-[protein] + tRNA(Leu) + H(+). The enzyme catalyses N-terminal L-aspartyl-[protein] + L-leucyl-tRNA(Leu) = N-terminal L-leucyl-L-aspartyl-[protein] + tRNA(Leu) + H(+). Functionally, functions in the N-end rule pathway of protein degradation where it conjugates Leu from its aminoacyl-tRNA to the N-termini of proteins containing an N-terminal aspartate or glutamate. The polypeptide is Aspartate/glutamate leucyltransferase (Brucella abortus (strain 2308)).